The following is a 194-amino-acid chain: Fe/S biogenesis protein NfuA (194 aa).

The [4Fe-4S] cluster site is built by cysteine 151 and cysteine 154.

The protein belongs to the NfuA family. Homodimer. [4Fe-4S] cluster serves as cofactor.

Its function is as follows. Involved in iron-sulfur cluster biogenesis. Binds a 4Fe-4S cluster, can transfer this cluster to apoproteins, and thereby intervenes in the maturation of Fe/S proteins. Could also act as a scaffold/chaperone for damaged Fe/S proteins. This chain is Fe/S biogenesis protein NfuA, found in Mannheimia succiniciproducens (strain KCTC 0769BP / MBEL55E).